The following is a 513-amino-acid chain: Cytochrome P450 86A1 (513 aa).

The chain crosses the membrane as a helical span at residues 7–27 (ILTGYAVAALSVYALWFYFLS). Cys-456 contacts heme.

It belongs to the cytochrome P450 family. Heme serves as cofactor. In terms of tissue distribution, expressed in roots.

It localises to the membrane. The enzyme catalyses an omega-methyl-long-chain fatty acid + reduced [NADPH--hemoprotein reductase] + O2 = an omega-hydroxy-long-chain fatty acid + oxidized [NADPH--hemoprotein reductase] + H2O + H(+). Functionally, catalyzes the omega-hydroxylation of various fatty acids (FA). Acts on saturated and unsaturated fatty acids with chain lengths from C12 to C18 but not on hexadecane. The protein is Cytochrome P450 86A1 (CYP86A1) of Arabidopsis thaliana (Mouse-ear cress).